The sequence spans 677 residues: Testis-specific Y-encoded-like protein 2 (677 aa).

The tract at residues 1-54 (MDRPDEGPPAKTPRLSSSEPRQRDLPPPPPPPLQRLPLPPPQQRPRPQEETEAA) is disordered. Lys-11 participates in a covalent cross-link: Glycyl lysine isopeptide (Lys-Gly) (interchain with G-Cter in SUMO2). A Phosphoserine modification is found at Ser-18. Over residues 25–44 (LPPPPPPPLQRLPLPPPQQR) the composition is skewed to pro residues. Residues Lys-158 and Lys-160 each participate in a glycyl lysine isopeptide (Lys-Gly) (interchain with G-Cter in SUMO2) cross-link. Positions 175 to 202 (KESVRRRQRRRRRRRKQRKAKESRERSA) are disordered. Over residues 178–193 (VRRRQRRRRRRRKQRK) the composition is skewed to basic residues. At Thr-333 the chain carries Phosphothreonine. The disordered stretch occupies residues 469-658 (ANENLCDSEN…EVNSEDSDIQ (190 aa)). The segment covering 484-493 (GYNTKITDNK) has biased composition (polar residues). A compositionally biased stretch (basic and acidic residues) spans 509-525 (EKNTYDSEDSNSEKADG). The segment covering 526 to 540 (DNTTLRDNQQVTNIQ) has biased composition (polar residues). Acidic residues-rich tracts occupy residues 543–581 (SDSD…DDDD) and 606–627 (DYEE…ETSE). A compositionally biased stretch (basic and acidic residues) spans 639–650 (DERIYGEERSEV). Phosphoserine occurs at positions 648, 652, and 655.

This sequence belongs to the nucleosome assembly protein (NAP) family. Interacts with histones. Interacts with CASK. Part of a complex containing CASK, TBR1 and TSPYL2. Post-translationally, phosphorylation at Thr-333 impairs function on cell proliferation. Present at high levels in the pituitary gland and at moderate levels in adrenal gland, brain, testis and ovary. In brain, expressed both in mature neurons and progenitor cells (at protein level).

The protein resides in the nucleus. Its subcellular location is the cytoplasm. Part of the CASK/TBR1/TSPYL2 transcriptional complex which modulates gene expression in response to neuronal synaptic activity, probably by facilitating nucleosome assembly. May inhibit cell proliferation by inducing p53-dependent CDKN1A expression. The protein is Testis-specific Y-encoded-like protein 2 (Tspyl2) of Mus musculus (Mouse).